We begin with the raw amino-acid sequence, 218 residues long: Octanoyltransferase (218 aa).

Residues 31–207 enclose the BPL/LPL catalytic domain; it reads AQTPDELWLL…QLAAQLGYAE (177 aa). Substrate contacts are provided by residues 70–77, 137–139, and 150–152; these read RGGQVTYH, SLG, and GLA. The active-site Acyl-thioester intermediate is the Cys-168.

It belongs to the LipB family.

The protein localises to the cytoplasm. The enzyme catalyses octanoyl-[ACP] + L-lysyl-[protein] = N(6)-octanoyl-L-lysyl-[protein] + holo-[ACP] + H(+). Its pathway is protein modification; protein lipoylation via endogenous pathway; protein N(6)-(lipoyl)lysine from octanoyl-[acyl-carrier-protein]: step 1/2. Functionally, catalyzes the transfer of endogenously produced octanoic acid from octanoyl-acyl-carrier-protein onto the lipoyl domains of lipoate-dependent enzymes. Lipoyl-ACP can also act as a substrate although octanoyl-ACP is likely to be the physiological substrate. In Azotobacter vinelandii (strain DJ / ATCC BAA-1303), this protein is Octanoyltransferase.